The chain runs to 636 residues: DNA-directed RNA polymerase subunit gamma (636 aa).

Positions 71, 73, 86, and 89 each coordinate Zn(2+). D467, D469, and D471 together coordinate Mg(2+).

The protein belongs to the RNA polymerase beta' chain family. RpoC1 subfamily. In terms of assembly, in cyanobacteria the RNAP catalytic core is composed of 2 alpha, 1 beta, 1 beta', 1 gamma and 1 omega subunit. When a sigma factor is associated with the core the holoenzyme is formed, which can initiate transcription. Mg(2+) serves as cofactor. Zn(2+) is required as a cofactor.

The enzyme catalyses RNA(n) + a ribonucleoside 5'-triphosphate = RNA(n+1) + diphosphate. DNA-dependent RNA polymerase catalyzes the transcription of DNA into RNA using the four ribonucleoside triphosphates as substrates. This Picosynechococcus sp. (strain ATCC 27264 / PCC 7002 / PR-6) (Agmenellum quadruplicatum) protein is DNA-directed RNA polymerase subunit gamma.